A 1135-amino-acid polypeptide reads, in one-letter code: Envelopment polyprotein (1135 aa).

Positions 1–18 (MGIWKWLVMASLVWPVLT) are cleaved as a signal peptide. At 19–485 (LRNVYDMKIE…VPGFHGWATA (467 aa)) the chain is on the lumenal side. Disulfide bonds link cysteine 29-cysteine 151, cysteine 63-cysteine 157, cysteine 109-cysteine 128, cysteine 133-cysteine 138, cysteine 175-cysteine 185, cysteine 210-cysteine 247, cysteine 234-cysteine 351, cysteine 376-cysteine 435, cysteine 380-cysteine 389, cysteine 405-cysteine 424, and cysteine 452-cysteine 475. N-linked (GlcNAc...) asparagine; by host glycosylation is present at asparagine 134. N-linked (GlcNAc...) asparagine; by host glycans are attached at residues asparagine 235 and asparagine 347. N-linked (GlcNAc...) asparagine; by host glycosylation occurs at asparagine 399. The helical transmembrane segment at 486 to 506 (ALLVTFCFGWVLIPAITFIIL) threads the bilayer. Over 507–627 (TVLKFIANIF…LNLFRYKSRC (121 aa)) the chain is Cytoplasmic. A binding to the ribonucleoprotein region spans residues 516–533 (FHTSNQENRLKSVLRKIK). CCHC-type zinc fingers lie at residues 545–565 (CDVC…GVSC) and 570–591 (CPYC…YKVC). Binding to the ribonucleoprotein regions lie at residues 588-605 (YKVC…KKTV), 592-603 (QVTHRFRDDLKK), and 611-625 (TPGC…RYKS). The region spanning 611–634 (TPGCYRTLNLFRYKSRCYIFTMWI) is the ITAM domain. Positions 615 to 618 (YRTL) match the YxxL motif. A helical transmembrane segment spans residues 628–648 (YIFTMWIFLLVLESILWAASA). The Lumenal portion of the chain corresponds to 649–1105 (SETPLTPVWN…EWISGIFSGN (457 aa)). Cystine bridges form between cysteine 735-cysteine 770, cysteine 739-cysteine 777, cysteine 751-cysteine 885, cysteine 765-cysteine 896, cysteine 780-cysteine 904, cysteine 806-cysteine 815, cysteine 823-cysteine 832, and cysteine 863-cysteine 867. The fusion loop stretch occupies residues 757 to 777 (YQYETSWGCNPSDCPGVGTGC). A glycan (N-linked (GlcNAc...) asparagine; by host) is linked at asparagine 928. 5 disulfides stabilise this stretch: cysteine 970-cysteine 1000, cysteine 993-cysteine 1045, cysteine 1010-cysteine 1015, cysteine 1046-cysteine 1051, and cysteine 1085-cysteine 1089. A helical membrane pass occupies residues 1106 to 1126 (WIVLIVLCVFLLFSLVLLSIL). A binding to the ribonucleoprotein region spans residues 1122–1135 (LLSILCPVRKHKKS). Over 1127-1135 (CPVRKHKKS) the chain is Cytoplasmic.

The protein belongs to the hantavirus envelope glycoprotein family. In terms of assembly, homodimer. Homotetramer; forms heterotetrameric Gn-Gc spikes in the pre-fusion conformation. Interacts (via C-terminus) with the nucleoprotein. Interacts with host TUFM; this interaction contributes to the virus-induced degradation of mitochondria by autophagy, which leads to degradation of host MAVS and inhibition of type I interferon (IFN) responses. Interacts with host MAP1LC3B; this interaction contributes to the virus-induced degradation of mitochondria by autophagy, which leads to degradation of host MAVS and inhibition of type I interferon (IFN) responses. Homotetramer; forms heterotetrameric Gn-Gc spikes in the pre-fusion conformation. Homotrimer; forms homotrimer in the post-fusion conformation at acidic pH. Interacts (via C-terminus) with the nucleoprotein. In terms of processing, specific enzymatic cleavage in vivo yield the mature proteins Glycoprotein N and Glycoprotein C.

It localises to the virion membrane. It is found in the host cell surface. The protein resides in the host Golgi apparatus membrane. Its subcellular location is the host endoplasmic reticulum membrane. The protein localises to the host mitochondrion. Functionally, forms homotetramers with glycoprotein C at the surface of the virion. Attaches the virion to host cell receptors including integrin ITGAV/ITGB3. This attachment induces virion internalization predominantly through clathrin-dependent endocytosis. May also bind to host C1QBP for virus entry into the host cell. Mediates the assembly and budding of infectious virus particles through its interaction with the nucleocapsid protein and the viral genome. May dysregulate normal immune and endothelial cell responses through an ITAM motif. Translocates to mitochondria, binds to host TUFM and recruits MAP1LC3B. These interactions induce mitochondrial autophagy and therefore destruction of host MAVS leading to inhibition of type I interferon (IFN) responses. Concomitant breakdown of glycoprotein N is apparently prevented by the nucleoprotein that may inhibit Gn-stimulated autophagosome-lysosome fusion. Interacts with the viral genomic RNA. Homodimer. Homotetramer; forms heterotetrameric Gn-Gc spikes in the pre-fusion conformation. Attaches the virion to host cell receptors including integrin ITGAV/ITGB3. This attachment induces virion internalization predominantly through clathrin-dependent endocytosis. May also bind to host C1QBP for virus entry into the host cell. Class II fusion protein that promotes fusion of viral membrane with host endosomal membrane after endocytosis of the virion. In Apodemus agrarius (Eurasian field mouse), this protein is Envelopment polyprotein (GP).